The primary structure comprises 459 residues: Exodeoxyribonuclease 7 large subunit (459 aa).

It belongs to the XseA family. In terms of assembly, heterooligomer composed of large and small subunits.

Its subcellular location is the cytoplasm. The catalysed reaction is Exonucleolytic cleavage in either 5'- to 3'- or 3'- to 5'-direction to yield nucleoside 5'-phosphates.. Bidirectionally degrades single-stranded DNA into large acid-insoluble oligonucleotides, which are then degraded further into small acid-soluble oligonucleotides. In Pseudomonas putida (strain ATCC 47054 / DSM 6125 / CFBP 8728 / NCIMB 11950 / KT2440), this protein is Exodeoxyribonuclease 7 large subunit.